Here is a 964-residue protein sequence, read N- to C-terminus: MDEQSVESIAEVFRCFICMEKLRDARLCPHCSKLCCFSCIRRWLTEQRAQCPHCRAPLQLRELVNCRWAEEVTQQLDTLQLCSLTKHEENEKDKCENHHEKLSVFCWTCKKCICHQCALWGGMHGGHTFKPLAEIYEQHVTKVNEEVAKLRRRLMELISLVQEVERNVEAVRNAKDERVREIRNAVEMMIARLDTQLKNKLITLMGQKTSLTQETELLESLLQEVEHQLRSCSKSELISKSSEILMMFQQVHRKPMASFVTTPVPPDFTSELVPSYDSATFVLENFSTLRQRADPVYSPPLQVSGLCWRLKVYPDGNGVVRGYYLSVFLELSAGLPETSKYEYRVEMVHQSCNDPTKNIIREFASDFEVGECWGYNRFFRLDLLANEGYLNPQNDTVILRFQVRSPTFFQKSRDQHWYITQLEAAQTSYIQQINNLKERLTIELSRTQKSRDLSPPDNHLSPQNDDALETRAKKSACSDMLLEGGPTTASVREAKEDEEDEEKIQNEDYHHELSDGDLDLDLVYEDEVNQLDGSSSSASSTATSNTEENDIDEETMSGENDVEYNNMELEEGELMEDAAAAGPAGSSHGYVGSSSRISRRTHLCSAATSSLLDIDPLILIHLLDLKDRSSIENLWGLQPRPPASLLQPTASYSRKDKDQRKQQAMWRVPSDLKMLKRLKTQMAEVRCMKTDVKNTLSEIKSSSAASGDMQTSLFSADQAALAACGTENSGRLQDLGMELLAKSSVANCYIRNSTNKKSNSPKPARSSVAGSLSLRRAVDPGENSRSKGDCQTLSEGSPGSSQSGSRHSSPRALIHGSIGDILPKTEDRQCKALDSDAVVVAVFSGLPAVEKRRKMVTLGANAKGGHLEGLQMTDLENNSETGELQPVLPEGASAAPEEGMSSDSDIECDTENEEQEEHTSVGGFHDSFMVMTQPPDEDTHSSFPDGEQIGPEDLSFNTDENSGR.

Met1 is modified (N-acetylmethionine). An RING-type; degenerate zinc finger spans residues 15–55; the sequence is CFICMEKLRDARLCPHCSKLCCFSCIRRWLTEQRAQCPHCR. Residues 90-132 form a B box-type zinc finger; it reads NEKDKCENHHEKLSVFCWTCKKCICHQCALWGGMHGGHTFKPL. Residues Cys95, His98, Cys117, and His124 each coordinate Zn(2+). The stretch at 132-234 forms a coiled coil; it reads LAEIYEQHVT…VEHQLRSCSK (103 aa). An MATH domain is found at 276-403; sequence YDSATFVLEN…NDTVILRFQV (128 aa). The stretch at 419 to 450 forms a coiled coil; that stretch reads ITQLEAAQTSYIQQINNLKERLTIELSRTQKS. Ser454 bears the Phosphoserine mark. 3 disordered regions span residues 477–513, 530–554, and 640–663; these read CSDM…HHEL, QLDG…IDEE, and RPPA…RKQQ. The segment covering 503-513 has biased composition (basic and acidic residues); the sequence is KIQNEDYHHEL. Over residues 534-544 the composition is skewed to low complexity; sequence SSSSASSTATS. A coiled-coil region spans residues 673–700; that stretch reads KMLKRLKTQMAEVRCMKTDVKNTLSEIK. Polar residues predominate over residues 752 to 761; sequence NSTNKKSNSP. 2 disordered regions span residues 752-812 and 891-964; these read NSTN…SPRA and GASA…NSGR. Basic and acidic residues predominate over residues 776-788; it reads RAVDPGENSRSKG. Residues 794 to 807 show a composition bias toward low complexity; the sequence is SEGSPGSSQSGSRH. The segment covering 904-916 has biased composition (acidic residues); the sequence is SDIECDTENEEQE. Over residues 955–964 the composition is skewed to polar residues; the sequence is SFNTDENSGR.

This sequence belongs to the TRIM/RBCC family. Associates with the PRC2/EED-EZH2 complex. Post-translationally, auto-ubiquitinated. As to expression, ubiquitous. Highly expressed in testis, while it is weakly expressed in other tissues.

The protein localises to the chromosome. Its subcellular location is the cytoplasm. It localises to the perinuclear region. It is found in the peroxisome membrane. It carries out the reaction S-ubiquitinyl-[E2 ubiquitin-conjugating enzyme]-L-cysteine + [acceptor protein]-L-lysine = [E2 ubiquitin-conjugating enzyme]-L-cysteine + N(6)-ubiquitinyl-[acceptor protein]-L-lysine.. Its pathway is protein modification; protein ubiquitination. In terms of biological role, E3 ubiquitin-protein ligase required to prevent centriole reduplication. Probably acts by ubiquitinating positive regulators of centriole reduplication. Mediates monoubiquitination of 'Lys-119' of histone H2A (H2AK119Ub), a specific tag for epigenetic transcriptional repression: associates with some Polycomb group (PcG) multiprotein PRC2-like complex and mediates repression of target genes. Also acts as a positive regulator of peroxisome import by mediating monoubiquitination of PEX5 at 'Lys-472': monoubiquitination promotes PEX5 stabilitation by preventing its polyubiquitination and degradation by the proteasome. Has anti-HIV activity. The chain is E3 ubiquitin-protein ligase TRIM37 from Homo sapiens (Human).